The following is a 615-amino-acid chain: RUN domain-containing protein 1 (615 aa).

The segment at 15-41 (TAVGPKAKDEEEEEEEEESLPPCETVR) is disordered. Residues 24-33 (EEEEEEEEES) show a composition bias toward acidic residues. Serine 73 is modified (phosphoserine). 2 coiled-coil regions span residues 76-102 (DATVRTLRRLEAERRQLDSALLALSSH) and 163-238 (RVRG…NLNE). Residues 147–180 (DPCGGDESDVLPGDRPRVRGEDQSEQEKRERLET) are disordered. A compositionally biased stretch (basic and acidic residues) spans 158-180 (PGDRPRVRGEDQSEQEKRERLET). Residues 423–604 (ELTTVVRKEL…LKFSLPVDLA (182 aa)) enclose the RUN domain. Serine 499 bears the Phosphoserine mark.

Its function is as follows. May play a role as p53/TP53 inhibitor and thus may have oncogenic activity. The sequence is that of RUN domain-containing protein 1 (Rundc1) from Mus musculus (Mouse).